Consider the following 784-residue polypeptide: Phosphate transporter PHO1 homolog 1 (784 aa).

The Cytoplasmic portion of the chain corresponds to 1 to 387 (MVKFTKQFEG…HHRKESHSVT (387 aa)). One can recognise an SPX domain in the interval 2 to 335 (VKFTKQFEGQ…GKQILPIYLK (334 aa)). The helical transmembrane segment at 388-408 (FFIGLFTGCFVALLAGYIIVA) threads the bilayer. Residues 409–429 (HLTGMYRQHSANTFYMETAYP) lie on the Extracellular side of the membrane. The helical transmembrane segment at 430-450 (VLSMFGLLFLHLFLYGCNIFM) threads the bilayer. The Cytoplasmic segment spans residues 451–474 (WRKARINYSFIFELGSKNELKYRD). A helical membrane pass occupies residues 475–495 (VFLICTASMSAIAGVMFVHLS). The Extracellular segment spans residues 496-507 (LLEKGYSFRQVQ). The helical transmembrane segment at 508–528 (VIPGLLLLGFLLILICPLNIF) threads the bilayer. At 529 to 654 (YKSSRYRLIS…TKVAYEKERS (126 aa)) the chain is on the cytoplasmic side. The 192-residue stretch at 593–784 (MRVKYYRDLA…LPFREVDEED (192 aa)) folds into the EXS domain. The chain crosses the membrane as a helical span at residues 655–675 (LGWLCLVVAMSSVATIYQLYW). Topologically, residues 676–703 (DFVKDWGLLQHNSNNPWLRNQLMLRQKS) are extracellular. The helical transmembrane segment at 704 to 724 (IYYFSMVLNLVLRLAWLQTVL) threads the bilayer. Topologically, residues 725 to 784 (HSSFEHVDYRVTGLFLAALEVIRRGQWNFYRLENEHLNNAGKFRAVKTVPLPFREVDEED) are cytoplasmic.

Belongs to the SYG1 (TC 2.A.94) family. In terms of tissue distribution, expressed in vascular cylinder of roots, leaves, stems, petals, sepals and filaments. Expressed in receptacle, stigma apex and anther connective tissue.

The protein localises to the cell membrane. Contributes to the loading of inorganic phosphate (Pi) into the root xylem vessels. This chain is Phosphate transporter PHO1 homolog 1 (PHO1-H1), found in Arabidopsis thaliana (Mouse-ear cress).